A 487-amino-acid polypeptide reads, in one-letter code: UDP-glucosyl transferase 73CC6 (487 aa).

His17 acts as the Proton acceptor in catalysis. The Charge relay role is filled by Asp114. UDP contacts are provided by Ser282, Trp346, Ala347, His364, Asn368, Ser369, Glu372, and Tyr386.

It belongs to the UDP-glycosyltransferase family. In terms of tissue distribution, mainly expressed in flowers and flower buds and, to a lesser extent, in leaves, stems and roots.

It participates in secondary metabolite biosynthesis; terpenoid biosynthesis. Component of the oleanane-type triterpene saponins (e.g. saponarioside A and saponarioside B) biosynthetic pathway, leading to the production of natural products with detergent properties used as traditional sources of soap. A glycosyltransferase that mediates the conversion of QA-di to QA-tri via the elongation of the C-3 sugar chain with a D-xylose. The protein is UDP-glucosyl transferase 73CC6 of Saponaria officinalis (Common soapwort).